The primary structure comprises 305 residues: Dermonecrotic toxin LiSicTox-alphaIA2aiii (305 aa).

Residues 1–17 (LPYIALILVCWSVLSQA) form the signal peptide. Residues 18 to 25 (AQTDVEER) constitute a propeptide that is removed on maturation. Residue histidine 37 is part of the active site. Residues glutamate 57 and aspartate 59 each coordinate Mg(2+). Histidine 73 serves as the catalytic Nucleophile. Intrachain disulfides connect cysteine 77–cysteine 83 and cysteine 79–cysteine 222. Residue aspartate 117 participates in Mg(2+) binding. Residue asparagine 282 is glycosylated (N-linked (GlcNAc...) asparagine).

This sequence belongs to the arthropod phospholipase D family. Class II subfamily. The cofactor is Mg(2+). In terms of tissue distribution, expressed by the venom gland.

Its subcellular location is the secreted. It carries out the reaction an N-(acyl)-sphingosylphosphocholine = an N-(acyl)-sphingosyl-1,3-cyclic phosphate + choline. The enzyme catalyses an N-(acyl)-sphingosylphosphoethanolamine = an N-(acyl)-sphingosyl-1,3-cyclic phosphate + ethanolamine. The catalysed reaction is a 1-acyl-sn-glycero-3-phosphocholine = a 1-acyl-sn-glycero-2,3-cyclic phosphate + choline. It catalyses the reaction a 1-acyl-sn-glycero-3-phosphoethanolamine = a 1-acyl-sn-glycero-2,3-cyclic phosphate + ethanolamine. Its function is as follows. Dermonecrotic toxins cleave the phosphodiester linkage between the phosphate and headgroup of certain phospholipids (sphingolipid and lysolipid substrates), forming an alcohol (often choline) and a cyclic phosphate. This toxin acts on sphingomyelin (SM). It may also act on ceramide phosphoethanolamine (CPE), lysophosphatidylcholine (LPC) and lysophosphatidylethanolamine (LPE), but not on lysophosphatidylserine (LPS), and lysophosphatidylglycerol (LPG). It acts by transphosphatidylation, releasing exclusively cyclic phosphate products as second products. Induces dermonecrosis, hemolysis, increased vascular permeability, edema, inflammatory response, and platelet aggregation. The protein is Dermonecrotic toxin LiSicTox-alphaIA2aiii of Loxosceles intermedia (Brown spider).